A 603-amino-acid polypeptide reads, in one-letter code: Aspartate--tRNA(Asp/Asn) ligase (603 aa).

Glu-172 serves as a coordination point for L-aspartate. The segment at 196–199 (QLFK) is aspartate. Arg-218 contacts L-aspartate. Residues 218–220 (RDE) and Gln-227 each bind ATP. Position 457 (His-457) interacts with L-aspartate. Glu-491 provides a ligand contact to ATP. Arg-498 contributes to the L-aspartate binding site. ATP is bound at residue 543–546 (GLDR).

This sequence belongs to the class-II aminoacyl-tRNA synthetase family. Type 1 subfamily. As to quaternary structure, homodimer.

Its subcellular location is the cytoplasm. The catalysed reaction is tRNA(Asx) + L-aspartate + ATP = L-aspartyl-tRNA(Asx) + AMP + diphosphate. Functionally, aspartyl-tRNA synthetase with relaxed tRNA specificity since it is able to aspartylate not only its cognate tRNA(Asp) but also tRNA(Asn). Reaction proceeds in two steps: L-aspartate is first activated by ATP to form Asp-AMP and then transferred to the acceptor end of tRNA(Asp/Asn). This is Aspartate--tRNA(Asp/Asn) ligase from Laribacter hongkongensis (strain HLHK9).